The following is a 270-amino-acid chain: MKTKTAFMAILFSLITVLSACGAGSQTTGAGQKKVQTITVGTGTQFPNICFIDEKGDLTGYDVELIKELDKRLPHYKFTFKTMEFSNLLVSLGQHKVDIVAHQMEKSKEREKKFLFNKVAYNHFPLKITVLQNNDTIRGIEDLKGKRVITSATSNGALVLKKWNEDNGRPFEIAYEGQGANETANQLKSGRADATISTPFAVDFQNKTSTIKEKTVGNVLSNAKVYFMFNKNEQTLSDDIDKALQEIIDDGTLKRLSLKWLGDDYSKEQY.

Residues 1 to 20 form the signal peptide; it reads MKTKTAFMAILFSLITVLSA. Residue Cys21 is the site of N-palmitoyl cysteine attachment. Cys21 is lipidated: S-diacylglycerol cysteine.

This sequence belongs to the bacterial solute-binding protein 3 family. The complex is composed of two ATP-binding proteins (TcyN), two transmembrane proteins (TcyL and TcyM) and two solute-binding proteins (TcyJ and TcyK).

The protein localises to the cell membrane. In terms of biological role, part of the ABC transporter complex TcyJKLMN involved in L-cystine import. Is also involved in cystathionine, djenkolate, and S-methylcysteine transport. In Bacillus subtilis (strain 168), this protein is L-cystine-binding protein TcyK (tcyK).